The following is a 403-amino-acid chain: Coenzyme A biosynthesis bifunctional protein CoaBC (403 aa).

The interval 1–197 is phosphopantothenoylcysteine decarboxylase; sequence MLHHVKLIYA…LHPKSLEGKR (197 aa). A phosphopantothenate--cysteine ligase region spans residues 198 to 403; the sequence is VLVTAGATRE…RLWDEIEKML (206 aa). CTP-binding residues include Asp287, Lys297, and Phe330.

In the N-terminal section; belongs to the HFCD (homo-oligomeric flavin containing Cys decarboxylase) superfamily. The protein in the C-terminal section; belongs to the PPC synthetase family. It depends on Mg(2+) as a cofactor. The cofactor is FMN.

It catalyses the reaction N-[(R)-4-phosphopantothenoyl]-L-cysteine + H(+) = (R)-4'-phosphopantetheine + CO2. The catalysed reaction is (R)-4'-phosphopantothenate + L-cysteine + CTP = N-[(R)-4-phosphopantothenoyl]-L-cysteine + CMP + diphosphate + H(+). The protein operates within cofactor biosynthesis; coenzyme A biosynthesis. In terms of biological role, catalyzes two sequential steps in the biosynthesis of coenzyme A. In the first step cysteine is conjugated to 4'-phosphopantothenate to form 4-phosphopantothenoylcysteine. In the second step the latter compound is decarboxylated to form 4'-phosphopantotheine. This chain is Coenzyme A biosynthesis bifunctional protein CoaBC, found in Thermococcus kodakarensis (strain ATCC BAA-918 / JCM 12380 / KOD1) (Pyrococcus kodakaraensis (strain KOD1)).